We begin with the raw amino-acid sequence, 493 residues long: MENVRRMALGLVVMMALALSGVGASVMEDTLLSVLFETYNPKVRPAQTVGDKVTVRVGLTLTNLLILNEKIEEMTTNVFLNLAWTDYRLQWDPAAYEGIKDLRIPSSDVWQPDIVLMNNNDGSFEITLHVNVLVQHTGAVSWQPSAIYRSSCTIKVMYFPFDWQNCTMVFKSYTYDTSEVTLQHALDAKGEREVKEIVINKDAFTENGQWSIEHKPSRKNWRSDDPSYEDVTFYLIIQRKPLFYIVYTIIPCILISILAILVFYLPPDAGEKMSLSISALLAVTVFLLLLADKVPETSLSVPIIIRYLMFIMILVAFSVILSVVVLNLHHRSPNTHTMPNWIRQIFIETLPPFLWIQRPVTTPSPDSKPTIISRANDEYFIRKPAGDFVCPVDNARVAVQPERLFSEMKWHLNGLTQPVTLPQDLKEAVEAIKYIAEQLESASEFDDLKKDWQYVAMVADRLFLYVFFVICSIGTFSIFLDASHNVPPDNPFA.

The signal sequence occupies residues 1–24 (MENVRRMALGLVVMMALALSGVGA). At 25–240 (SVMEDTLLSV…VTFYLIIQRK (216 aa)) the chain is on the extracellular side. Residues Cys152 and Cys166 are joined by a disulfide bond. The N-linked (GlcNAc...) asparagine glycan is linked to Asn165. 3 helical membrane-spanning segments follow: residues 241–265 (PLFY…VFYL), 273–291 (MSLS…LLLA), and 307–328 (YLMF…VLNL). Topologically, residues 329–461 (HHRSPNTHTM…WQYVAMVADR (133 aa)) are cytoplasmic. The residue at position 379 (Tyr379) is a Phosphotyrosine; by Tyr-kinases. Residues 462–480 (LFLYVFFVICSIGTFSIFL) form a helical membrane-spanning segment.

It belongs to the ligand-gated ion channel (TC 1.A.9) family. Acetylcholine receptor (TC 1.A.9.1) subfamily. Beta-1/CHRNB1 sub-subfamily. As to quaternary structure, pentamer of two alpha chains, and one each of the beta, delta, and gamma chains.

The protein resides in the postsynaptic cell membrane. It is found in the cell membrane. It carries out the reaction K(+)(in) = K(+)(out). It catalyses the reaction Na(+)(in) = Na(+)(out). In terms of biological role, after binding acetylcholine, the AChR responds by an extensive change in conformation that affects all subunits and leads to opening of an ion-conducting channel across the plasma membrane. This is Acetylcholine receptor subunit beta (CHRNB1) from Tetronarce californica (Pacific electric ray).